An 82-amino-acid chain; its full sequence is Large ribosomal subunit protein bL31B (82 aa).

The protein belongs to the bacterial ribosomal protein bL31 family. Type B subfamily. Part of the 50S ribosomal subunit.

The protein is Large ribosomal subunit protein bL31B of Pectobacterium carotovorum subsp. carotovorum (strain PC1).